We begin with the raw amino-acid sequence, 440 residues long: Zinc finger MYND domain-containing protein 10 (440 aa).

The interaction with DNAAF11 stretch occupies residues 366-440; that stretch reads QDLRLQARRW…VLAAQGDRAK (75 aa). Residues Cys394, Cys397, Cys405, Cys408, Cys414, Cys418, His426, and Cys430 each contribute to the Zn(2+) site. Residues 394–430 form an MYND-type zinc finger; the sequence is CAYCSAEASKRCSRCQNEWYCCRECQVKHWEKHGKTC.

The protein belongs to the ZMYND10 family. In terms of assembly, interacts (via C-terminus) with DNAAF11 (via CS domain); this interaction stabilizes DNAAF11 at the protein level. Interacts (via C-terminus) with DNAL1; this interaction stabilizes DNAL1 at the protein level. Interacts with DNAAF4, HSPA8, IQUB, RUVBL2 and DYNTL5.

The protein resides in the cytoplasm. The protein localises to the cytoskeleton. Its subcellular location is the microtubule organizing center. It is found in the centrosome. It localises to the centriolar satellite. The protein resides in the apical cell membrane. The protein localises to the dynein axonemal particle. Functionally, plays a role in axonemal structure organization and motility. Involved in axonemal pre-assembly of inner and outer dynein arms (IDA and ODA, respectively) for proper axoneme building for cilia motility. May act by indirectly regulating transcription of dynein proteins. The protein is Zinc finger MYND domain-containing protein 10 of Homo sapiens (Human).